The chain runs to 225 residues: Membrane protein (225 aa).

The Virion surface portion of the chain corresponds to 1 to 20 (MSNETNCTLDFEQSVELFKE). Residues 21 to 41 (YNLFITAFLLFLTIILQYGYA) form a helical membrane-spanning segment. The Intravirion segment spans residues 42-51 (TRSKFIYILK). The helical transmembrane segment at 52–72 (MIVLWCFWPLNIAVGVISCIY) threads the bilayer. At 73–77 (PPNTG) the chain is on the virion surface side. Residues 78–98 (GLVAAIILTVFACLSFVGYWI) traverse the membrane as a helical segment. Residues 99 to 225 (QSIRLFKRCR…VATGGSSLYT (127 aa)) lie on the Intravirion side of the membrane.

Belongs to the gammacoronaviruses M protein family. In terms of assembly, homomultimer. Interacts with envelope E protein in the budding compartment of the host cell, which is located between endoplasmic reticulum and the Golgi complex. Forms a complex with HE and S proteins. Interacts with nucleocapsid N protein. This interaction probably participates in RNA packaging into the virus.

Its subcellular location is the virion membrane. The protein localises to the host Golgi apparatus membrane. Component of the viral envelope that plays a central role in virus morphogenesis and assembly via its interactions with other viral proteins. This is Membrane protein from Gallus gallus (Chicken).